The primary structure comprises 345 residues: uncharacterized protein (345 aa).

This is an uncharacterized protein from Saccharomyces cerevisiae (strain ATCC 204508 / S288c) (Baker's yeast).